Consider the following 45-residue polypeptide: Caltrin-like protein 1 (45 aa).

Residues 8-45 (DSDRPNCSRYVQHLYMCTKELDPVCGTDGHTYGNRSIF) enclose the Kazal-like domain. Residues Asn-13 and Asn-41 are each glycosylated (N-linked (GlcNAc...) asparagine).

Post-translationally, glycosylated.

Its subcellular location is the secreted. Inhibits calcium transport into spermatozoa. This is Caltrin-like protein 1 from Cavia porcellus (Guinea pig).